Here is a 599-residue protein sequence, read N- to C-terminus: Aspartate--tRNA ligase (599 aa).

Glu180 contributes to the L-aspartate binding site. The tract at residues 204 to 207 (QIFK) is aspartate. Arg226 is an L-aspartate binding site. ATP is bound by residues 226-228 (RDE) and Gln235. His454 is an L-aspartate binding site. Glu488 serves as a coordination point for ATP. Arg495 serves as a coordination point for L-aspartate. 540 to 543 (GLDR) provides a ligand contact to ATP.

Belongs to the class-II aminoacyl-tRNA synthetase family. Type 1 subfamily. As to quaternary structure, homodimer.

Its subcellular location is the cytoplasm. The enzyme catalyses tRNA(Asp) + L-aspartate + ATP = L-aspartyl-tRNA(Asp) + AMP + diphosphate. Functionally, catalyzes the attachment of L-aspartate to tRNA(Asp) in a two-step reaction: L-aspartate is first activated by ATP to form Asp-AMP and then transferred to the acceptor end of tRNA(Asp). The chain is Aspartate--tRNA ligase from Clostridium beijerinckii (strain ATCC 51743 / NCIMB 8052) (Clostridium acetobutylicum).